The following is a 159-amino-acid chain: Cyclic pyranopterin monophosphate synthase (159 aa).

Substrate is bound by residues 75–77 (LCH) and 113–114 (ME). Residue Asp128 is part of the active site.

The protein belongs to the MoaC family. As to quaternary structure, homohexamer; trimer of dimers.

It carries out the reaction (8S)-3',8-cyclo-7,8-dihydroguanosine 5'-triphosphate = cyclic pyranopterin phosphate + diphosphate. It participates in cofactor biosynthesis; molybdopterin biosynthesis. Catalyzes the conversion of (8S)-3',8-cyclo-7,8-dihydroguanosine 5'-triphosphate to cyclic pyranopterin monophosphate (cPMP). In Thiobacillus denitrificans (strain ATCC 25259 / T1), this protein is Cyclic pyranopterin monophosphate synthase.